The following is a 202-amino-acid chain: ATP-dependent Clp protease proteolytic subunit (202 aa).

Ser106 serves as the catalytic Nucleophile. Residue His131 is part of the active site.

The protein belongs to the peptidase S14 family. Fourteen ClpP subunits assemble into 2 heptameric rings which stack back to back to give a disk-like structure with a central cavity, resembling the structure of eukaryotic proteasomes.

The protein resides in the cytoplasm. It catalyses the reaction Hydrolysis of proteins to small peptides in the presence of ATP and magnesium. alpha-casein is the usual test substrate. In the absence of ATP, only oligopeptides shorter than five residues are hydrolyzed (such as succinyl-Leu-Tyr-|-NHMec, and Leu-Tyr-Leu-|-Tyr-Trp, in which cleavage of the -Tyr-|-Leu- and -Tyr-|-Trp bonds also occurs).. Cleaves peptides in various proteins in a process that requires ATP hydrolysis. Has a chymotrypsin-like activity. Plays a major role in the degradation of misfolded proteins. The polypeptide is ATP-dependent Clp protease proteolytic subunit (Variovorax paradoxus (strain S110)).